Reading from the N-terminus, the 333-residue chain is Eukaryotic translation initiation factor 2 subunit 2 (333 aa).

3 disordered regions span residues 1-87, 98-117, and 141-165; these read MSGD…KSKK, IKDLKIESDVQEPAEPEEDL, and EKDEALEDEDSKKDDGISFSNQTGP. S2 bears the N-acetylserine mark. Residues S2 and S13 each carry the phosphoserine modification. Basic residues predominate over residues 13 to 22; sequence SKKKKKKKKP. T36 is subject to Phosphothreonine. Positions 40 to 51 are enriched in basic and acidic residues; that stretch reads ETKEVEPEPTED. S67 is modified (phosphoserine). A Glycyl lysine isopeptide (Lys-Gly) (interchain with G-Cter in SUMO2) cross-link involves residue K102. Position 105 is a phosphoserine (S105). Residues 106–117 are compositionally biased toward acidic residues; it reads DVQEPAEPEEDL. Residues S158 and S218 each carry the phosphoserine modification. N6-acetyllysine occurs at positions 265 and 293. Residues 281–305 form a C4-type zinc finger; the sequence is CHTCRSPDTILQKDTRLYFLQCETC.

Belongs to the eIF-2-beta/eIF-5 family. Eukaryotic translation initiation factor 2 eIF2 is a heterotrimeric complex composed of an alpha (EIF2S1), a beta (EIF2S2) and a gamma (EIF2S3) chain. eIF2 is member of the 43S pre-initiation complex (43S PIC). eIF2 forms a complex with at least CELF1/CUGBP1, CALR, CALR3, EIF2S1, EIF2S2, HSP90B1 and HSPA5. Interacts with BZW2/5MP1. Interacts with EIF5.

The protein localises to the cytoplasm. Its subcellular location is the cytosol. Component of the eIF2 complex that functions in the early steps of protein synthesis by forming a ternary complex with GTP and initiator tRNA. This complex binds to a 40S ribosomal subunit, followed by mRNA binding to form a 43S pre-initiation complex (43S PIC). Junction of the 60S ribosomal subunit to form the 80S initiation complex is preceded by hydrolysis of the GTP bound to eIF2 and release of an eIF2-GDP binary complex. In order for eIF2 to recycle and catalyze another round of initiation, the GDP bound to eIF2 must exchange with GTP by way of a reaction catalyzed by eIF2B. The polypeptide is Eukaryotic translation initiation factor 2 subunit 2 (EIF2S2) (Bos taurus (Bovine)).